The chain runs to 854 residues: Probable disease resistance protein At1g51480 (854 aa).

Residues 25-62 adopt a coiled-coil conformation; that stretch reads RNYIHKMEANLDDLHTTMEELKNGRDDLLRRVSIEEDK. The region spanning 138-441 is the NB-ARC domain; it reads AHKIPVPKVE…CEGYINPNRY (304 aa). 180–187 serves as a coordination point for ATP; it reads GMGGVGKT. LRR repeat units lie at residues 514 to 535, 536 to 557, 560 to 582, 584 to 605, 607 to 629, and 631 to 652; these read IVRQVSLISTQIEKISCSSKCS, NLSTLLLPYNKLVNISVGFFLF, KLVVLDLSTNMSLIELPEEISNL, SLQYLNLSSTGIKSLPGGMKKL, KLIYLNLEFSYKLESLVGISATL, and NLQVLKLFYSNVCVDDILMEEL.

The protein belongs to the disease resistance NB-LRR family.

Probable disease resistance protein. The polypeptide is Probable disease resistance protein At1g51480 (Arabidopsis thaliana (Mouse-ear cress)).